A 76-amino-acid polypeptide reads, in one-letter code: UPF0154 protein LCA_1273 (76 aa).

A helical membrane pass occupies residues Ile-3–Phe-23. Residues Pro-55–Lys-76 are disordered.

It belongs to the UPF0154 family.

It localises to the cell membrane. This chain is UPF0154 protein LCA_1273, found in Latilactobacillus sakei subsp. sakei (strain 23K) (Lactobacillus sakei subsp. sakei).